Reading from the N-terminus, the 102-residue chain is Co-chaperonin GroES (102 aa).

The protein belongs to the GroES chaperonin family. As to quaternary structure, heptamer of 7 subunits arranged in a ring. Interacts with the chaperonin GroEL.

It is found in the cytoplasm. Functionally, together with the chaperonin GroEL, plays an essential role in assisting protein folding. The GroEL-GroES system forms a nano-cage that allows encapsulation of the non-native substrate proteins and provides a physical environment optimized to promote and accelerate protein folding. GroES binds to the apical surface of the GroEL ring, thereby capping the opening of the GroEL channel. This is Co-chaperonin GroES from Chlamydia trachomatis serovar D (strain ATCC VR-885 / DSM 19411 / UW-3/Cx).